The following is a 146-amino-acid chain: MNIIAQLEAEQCAKIAEKRQLPAFQVGDTVRVMVRVTEGTRTRVQAYEGVCIARSGYGFNENFTVRKISYGEGVERVFPFYSPLIEGVELVRRGKVRRAKLYYLRALRGKAARIAEKRDYRKKNVQIVEEEVAPAVEANVETTTAE.

This sequence belongs to the bacterial ribosomal protein bL19 family.

This protein is located at the 30S-50S ribosomal subunit interface and may play a role in the structure and function of the aminoacyl-tRNA binding site. In Bartonella bacilliformis (strain ATCC 35685 / KC583 / Herrer 020/F12,63), this protein is Large ribosomal subunit protein bL19.